The chain runs to 170 residues: Bifunctional protein PyrR (170 aa).

A PRPP-binding motif is present at residues 90–102; sequence LVLIDDVLMSGRT.

It belongs to the purine/pyrimidine phosphoribosyltransferase family. PyrR subfamily.

It carries out the reaction UMP + diphosphate = 5-phospho-alpha-D-ribose 1-diphosphate + uracil. Its function is as follows. Regulates the transcription of the pyrimidine nucleotide (pyr) operon in response to exogenous pyrimidines. Functionally, also displays a weak uracil phosphoribosyltransferase activity which is not physiologically significant. The polypeptide is Bifunctional protein PyrR (Pseudomonas syringae pv. tomato (strain ATCC BAA-871 / DC3000)).